A 349-amino-acid chain; its full sequence is NADH-quinone oxidoreductase subunit H (349 aa).

8 helical membrane passes run 20–42 (WTLI…LTYF), 88–108 (GIFI…WAVV), 123–143 (LLYI…SGWA), 167–187 (MGFS…VEIV), 202–222 (FLSW…ISGV), 249–269 (GMAF…VSAL), 284–304 (FLPD…FLFL), and 325–345 (VFVP…MSPL).

It belongs to the complex I subunit 1 family. In terms of assembly, NDH-1 is composed of 14 different subunits. Subunits NuoA, H, J, K, L, M, N constitute the membrane sector of the complex.

The protein resides in the cell inner membrane. It catalyses the reaction a quinone + NADH + 5 H(+)(in) = a quinol + NAD(+) + 4 H(+)(out). In terms of biological role, NDH-1 shuttles electrons from NADH, via FMN and iron-sulfur (Fe-S) centers, to quinones in the respiratory chain. The immediate electron acceptor for the enzyme in this species is believed to be ubiquinone. Couples the redox reaction to proton translocation (for every two electrons transferred, four hydrogen ions are translocated across the cytoplasmic membrane), and thus conserves the redox energy in a proton gradient. This subunit may bind ubiquinone. In Dechloromonas aromatica (strain RCB), this protein is NADH-quinone oxidoreductase subunit H.